Consider the following 1261-residue polypeptide: Rho GTPase-activating protein 29 (1261 aa).

Ser171, Ser176, Ser179, and Ser190 each carry phosphoserine. Positions 192–462 (LELDNVLLKN…SAKLYDPGQE (271 aa)) constitute an F-BAR domain. Positions 296 to 418 (RKNEMEKQRK…EILAQLRTLV (123 aa)) form a coiled coil. Positions 481-501 (NVNKHLNSSQPSGFGPANSLE) are disordered. Ser499, Ser519, and Ser552 each carry phosphoserine. A compositionally biased stretch (low complexity) spans 541 to 559 (SESTGGSSESRSLDSESIS). The segment at 541 to 600 (SESTGGSSESRSLDSESISPGDFHRKLPRTPSSGTMSSADDLDEREPPSPSETGPNSLGT) is disordered. The Phorbol-ester/DAG-type zinc finger occupies 612-657 (THKFRKLRSPTKCRDCEGIVVFQGVECEECLLVCHRKCLENLVIIC). The 216-residue stretch at 671 to 886 (AEFTQVAKKE…FLITYSQKIF (216 aa)) folds into the Rho-GAP domain. 2 positions are modified to phosphoserine: Ser913 and Ser949. The disordered stretch occupies residues 981–1011 (SASQKIEDGKTPKPLSLKSDRSTNNVERHTP). Positions 998–1010 (KSDRSTNNVERHT) are enriched in basic and acidic residues. A phosphoserine mark is found at Ser1019, Ser1144, and Ser1146. Disordered stretches follow at residues 1117 to 1153 (HSINATQPSKPYAEPVRSVREASERRSSDSYPLAPVR) and 1178 to 1238 (GNEE…VNPM). The segment covering 1133–1144 (RSVREASERRSS) has biased composition (basic and acidic residues). An interaction with PTPN13/PTPL1 region spans residues 1258 to 1261 (PQFV).

As to quaternary structure, interacts with PTPN13/PTPL1. Interacts with RAP2A via its coiled coil domain. Interacts with RASIP1. As to expression, widely expressed. Highly expressed in skeletal muscle and heart. Expressed at intermediate level in placenta, liver and pancreas. Weakly expressed in brain, lung and kidney.

GTPase activator for the Rho-type GTPases by converting them to an inactive GDP-bound state. Has strong activity toward RHOA, and weaker activity toward RAC1 and CDC42. May act as a specific effector of RAP2A to regulate Rho. In concert with RASIP1, suppresses RhoA signaling and dampens ROCK and MYH9 activities in endothelial cells and plays an essential role in blood vessel tubulogenesis. The polypeptide is Rho GTPase-activating protein 29 (ARHGAP29) (Homo sapiens (Human)).